The chain runs to 151 residues: UPF0178 protein YaiI (151 aa).

The protein belongs to the UPF0178 family.

In Salmonella paratyphi C (strain RKS4594), this protein is UPF0178 protein YaiI.